The primary structure comprises 457 residues: tRNA-2-methylthio-N(6)-dimethylallyladenosine synthase (457 aa).

In terms of domain architecture, MTTase N-terminal spans 3–120 (KKVYVKTFGC…LPQMIDARRA (118 aa)). [4Fe-4S] cluster contacts are provided by Cys12, Cys49, Cys83, Cys157, Cys161, and Cys164. The region spanning 143-377 (RVEGPSAFVS…QATIEENVAR (235 aa)) is the Radical SAM core domain. Positions 380-447 (QSMVGKVERI…PHSLRGELVI (68 aa)) constitute a TRAM domain.

The protein belongs to the methylthiotransferase family. MiaB subfamily. Monomer. It depends on [4Fe-4S] cluster as a cofactor.

It localises to the cytoplasm. The catalysed reaction is N(6)-dimethylallyladenosine(37) in tRNA + (sulfur carrier)-SH + AH2 + 2 S-adenosyl-L-methionine = 2-methylsulfanyl-N(6)-dimethylallyladenosine(37) in tRNA + (sulfur carrier)-H + 5'-deoxyadenosine + L-methionine + A + S-adenosyl-L-homocysteine + 2 H(+). In terms of biological role, catalyzes the methylthiolation of N6-(dimethylallyl)adenosine (i(6)A), leading to the formation of 2-methylthio-N6-(dimethylallyl)adenosine (ms(2)i(6)A) at position 37 in tRNAs that read codons beginning with uridine. In Burkholderia cenocepacia (strain ATCC BAA-245 / DSM 16553 / LMG 16656 / NCTC 13227 / J2315 / CF5610) (Burkholderia cepacia (strain J2315)), this protein is tRNA-2-methylthio-N(6)-dimethylallyladenosine synthase.